The following is a 1972-amino-acid chain: Myosin-11 (1972 aa).

Phosphoserine occurs at positions 8, 23, and 40. The region spanning 31-81 (VAKKLVWVPSEKQGFEAASIKEEKGDEVVVELVENGKKVTVGKDDIQKMNP) is the Myosin N-terminal SH3-like domain. Residues 85-783 (SKVEDMAELT…VLAHLEEERD (699 aa)) form the Myosin motor domain. Lysine 129 bears the N6,N6,N6-trimethyllysine mark. An ATP-binding site is contributed by 178 to 185 (GESGAGKT). 2 actin-binding regions span residues 661–683 (LGKL…IPNH) and 762–776 (RIGQ…GVLA). Residues 786-815 (ITDVIMAFQAMCRGYLARKAFTKRQQQLTA) enclose the IQ domain. A coiled-coil region spans residues 844 to 1934 (LLQVTRQEEE…KSKLRRGNEA (1091 aa)). Threonine 1177 bears the Phosphothreonine mark. Serine 1684 and serine 1722 each carry phosphoserine. Polar residues predominate over residues 1771–1788 (NELATERSTAQKNESARQ). Disordered stretches follow at residues 1771-1797 (NELA…NKEL) and 1867-1972 (QYKE…KASE). A compositionally biased stretch (basic and acidic residues) spans 1867–1876 (QYKEQAEKGN). The interval 1935-1972 (SFVPSRRAGGRRVIENTDGSEEEMDARDSDFNGTKASE) is C-terminal. Threonine 1951 carries the phosphothreonine modification. A phosphoserine mark is found at serine 1954 and serine 1971.

This sequence belongs to the TRAFAC class myosin-kinesin ATPase superfamily. Myosin family. In terms of assembly, muscle myosin is a hexameric protein that consists of 2 heavy chain subunits (MHC), 2 alkali light chain subunits (MLC) and 2 regulatory light chain subunits (MLC-2).

Its subcellular location is the melanosome. It is found in the cytoplasm. The protein resides in the myofibril. Functionally, muscle contraction. This is Myosin-11 (Myh11) from Mus musculus (Mouse).